Here is a 353-residue protein sequence, read N- to C-terminus: Photosystem II protein D1 (353 aa).

Thr-2 is subject to N-acetylthreonine. Residue Thr-2 is modified to Phosphothreonine. Helical transmembrane passes span 29-46 (YIGWFGVLMIPTLLTATS), 118-133 (HFLLGVACYMGREWEL), and 142-156 (WIAVAYSAPVAAATA). Residue His-118 participates in chlorophyll a binding. Tyr-126 contacts pheophytin a. [CaMn4O5] cluster contacts are provided by Asp-170 and Glu-189. Residues 197-218 (FHMLGVAGVFGGSLFSAMHGSL) traverse the membrane as a helical segment. His-198 is a chlorophyll a binding site. A quinone-binding positions include His-215 and 264–265 (SF). Residue His-215 coordinates Fe cation. Residue His-272 participates in Fe cation binding. A helical transmembrane segment spans residues 274–288 (FLAAWPVVGIWFTAL). 4 residues coordinate [CaMn4O5] cluster: His-332, Glu-333, Asp-342, and Ala-344. Positions 345–353 (GVEVPSTNG) are excised as a propeptide.

This sequence belongs to the reaction center PufL/M/PsbA/D family. In terms of assembly, PSII is composed of 1 copy each of membrane proteins PsbA, PsbB, PsbC, PsbD, PsbE, PsbF, PsbH, PsbI, PsbJ, PsbK, PsbL, PsbM, PsbT, PsbX, PsbY, PsbZ, Psb30/Ycf12, at least 3 peripheral proteins of the oxygen-evolving complex and a large number of cofactors. It forms dimeric complexes. It depends on The D1/D2 heterodimer binds P680, chlorophylls that are the primary electron donor of PSII, and subsequent electron acceptors. It shares a non-heme iron and each subunit binds pheophytin, quinone, additional chlorophylls, carotenoids and lipids. D1 provides most of the ligands for the Mn4-Ca-O5 cluster of the oxygen-evolving complex (OEC). There is also a Cl(-1) ion associated with D1 and D2, which is required for oxygen evolution. The PSII complex binds additional chlorophylls, carotenoids and specific lipids. as a cofactor. Tyr-161 forms a radical intermediate that is referred to as redox-active TyrZ, YZ or Y-Z. In terms of processing, C-terminally processed by CTPA; processing is essential to allow assembly of the oxygen-evolving complex and thus photosynthetic growth.

Its subcellular location is the plastid. The protein localises to the chloroplast thylakoid membrane. It carries out the reaction 2 a plastoquinone + 4 hnu + 2 H2O = 2 a plastoquinol + O2. In terms of biological role, photosystem II (PSII) is a light-driven water:plastoquinone oxidoreductase that uses light energy to abstract electrons from H(2)O, generating O(2) and a proton gradient subsequently used for ATP formation. It consists of a core antenna complex that captures photons, and an electron transfer chain that converts photonic excitation into a charge separation. The D1/D2 (PsbA/PsbD) reaction center heterodimer binds P680, the primary electron donor of PSII as well as several subsequent electron acceptors. The sequence is that of Photosystem II protein D1 from Morus indica (Mulberry).